We begin with the raw amino-acid sequence, 112 residues long: Nucleoid-associated protein lpg2755 (112 aa).

The protein belongs to the YbaB/EbfC family. Homodimer.

Its subcellular location is the cytoplasm. The protein localises to the nucleoid. In terms of biological role, binds to DNA and alters its conformation. May be involved in regulation of gene expression, nucleoid organization and DNA protection. The polypeptide is Nucleoid-associated protein lpg2755 (Legionella pneumophila subsp. pneumophila (strain Philadelphia 1 / ATCC 33152 / DSM 7513)).